A 239-amino-acid chain; its full sequence is Ditrans,polycis-undecaprenyl-diphosphate synthase ((2E,6E)-farnesyl-diphosphate specific) (239 aa).

Asp-18 is an active-site residue. Asp-18 contacts Mg(2+). Substrate-binding positions include 19 to 22 (GNGR), Trp-23, Arg-31, His-35, and 63 to 65 (SSE). Asn-66 (proton acceptor) is an active-site residue. Substrate is bound by residues Trp-67, Arg-69, Arg-186, and 192–194 (RIS). A Mg(2+)-binding site is contributed by Glu-205.

Belongs to the UPP synthase family. In terms of assembly, homodimer. It depends on Mg(2+) as a cofactor.

The enzyme catalyses 8 isopentenyl diphosphate + (2E,6E)-farnesyl diphosphate = di-trans,octa-cis-undecaprenyl diphosphate + 8 diphosphate. In terms of biological role, catalyzes the sequential condensation of isopentenyl diphosphate (IPP) with (2E,6E)-farnesyl diphosphate (E,E-FPP) to yield (2Z,6Z,10Z,14Z,18Z,22Z,26Z,30Z,34E,38E)-undecaprenyl diphosphate (di-trans,octa-cis-UPP). UPP is the precursor of glycosyl carrier lipid in the biosynthesis of bacterial cell wall polysaccharide components such as peptidoglycan and lipopolysaccharide. This Haemophilus influenzae (strain ATCC 51907 / DSM 11121 / KW20 / Rd) protein is Ditrans,polycis-undecaprenyl-diphosphate synthase ((2E,6E)-farnesyl-diphosphate specific).